The sequence spans 229 residues: MKRKNIALIPAAGIGARFGADKPKQYVEIGSKTVLEHTIGIFERHEAVDLTVVVVSPEDTFADKVQTAFPQVRVWKNGGQTRAETVRNGVAKLLETGLAAETDNILVHDAARCCLPSEALTRLIEQAGNAAEGGILAIPVADTLKCADGGNISATVERTSLWQAQTPQLFRAGLLHRALAAENLDGITDEASAVEKLGIRPLLVQGDARNLKLTQPQDAYIVRLLLDAV.

It belongs to the IspD/TarI cytidylyltransferase family. IspD subfamily.

It carries out the reaction 2-C-methyl-D-erythritol 4-phosphate + CTP + H(+) = 4-CDP-2-C-methyl-D-erythritol + diphosphate. It functions in the pathway isoprenoid biosynthesis; isopentenyl diphosphate biosynthesis via DXP pathway; isopentenyl diphosphate from 1-deoxy-D-xylulose 5-phosphate: step 2/6. Functionally, catalyzes the formation of 4-diphosphocytidyl-2-C-methyl-D-erythritol from CTP and 2-C-methyl-D-erythritol 4-phosphate (MEP). The polypeptide is 2-C-methyl-D-erythritol 4-phosphate cytidylyltransferase (Neisseria meningitidis serogroup A / serotype 4A (strain DSM 15465 / Z2491)).